A 1391-amino-acid chain; its full sequence is DNA-directed RNA polymerase subunit beta'' (1391 aa).

Residues C220, C291, C298, and C301 each contribute to the Zn(2+) site.

The protein belongs to the RNA polymerase beta' chain family. RpoC2 subfamily. In terms of assembly, in plastids the minimal PEP RNA polymerase catalytic core is composed of four subunits: alpha, beta, beta', and beta''. When a (nuclear-encoded) sigma factor is associated with the core the holoenzyme is formed, which can initiate transcription. Zn(2+) serves as cofactor.

It is found in the plastid. Its subcellular location is the chloroplast. The catalysed reaction is RNA(n) + a ribonucleoside 5'-triphosphate = RNA(n+1) + diphosphate. In terms of biological role, DNA-dependent RNA polymerase catalyzes the transcription of DNA into RNA using the four ribonucleoside triphosphates as substrates. The chain is DNA-directed RNA polymerase subunit beta'' from Gossypium barbadense (Sea Island cotton).